The following is a 729-amino-acid chain: Fatty acid oxidation complex subunit alpha (729 aa).

Positions 1–189 are enoyl-CoA hydratase/isomerase; sequence MLYKGDTLYL…KIGLVDGVVK (189 aa). Asp-296 contacts substrate. Positions 311–729 are 3-hydroxyacyl-CoA dehydrogenase; sequence ETPKQAAVLG…ARPVGSLKTA (419 aa). NAD(+) contacts are provided by residues Met-324, Asp-343, 400–402, Lys-407, and Ser-429; that span reads VVE. Residue His-450 is the For 3-hydroxyacyl-CoA dehydrogenase activity of the active site. Asn-453 provides a ligand contact to NAD(+). 2 residues coordinate substrate: Asn-500 and Tyr-660. The segment at 708-729 is disordered; that stretch reads RHNEPYYPPVEPARPVGSLKTA.

In the N-terminal section; belongs to the enoyl-CoA hydratase/isomerase family. This sequence in the C-terminal section; belongs to the 3-hydroxyacyl-CoA dehydrogenase family. In terms of assembly, heterotetramer of two alpha chains (FadB) and two beta chains (FadA).

The catalysed reaction is a (3S)-3-hydroxyacyl-CoA + NAD(+) = a 3-oxoacyl-CoA + NADH + H(+). It carries out the reaction a (3S)-3-hydroxyacyl-CoA = a (2E)-enoyl-CoA + H2O. It catalyses the reaction a 4-saturated-(3S)-3-hydroxyacyl-CoA = a (3E)-enoyl-CoA + H2O. The enzyme catalyses (3S)-3-hydroxybutanoyl-CoA = (3R)-3-hydroxybutanoyl-CoA. The catalysed reaction is a (3Z)-enoyl-CoA = a 4-saturated (2E)-enoyl-CoA. It carries out the reaction a (3E)-enoyl-CoA = a 4-saturated (2E)-enoyl-CoA. The protein operates within lipid metabolism; fatty acid beta-oxidation. In terms of biological role, involved in the aerobic and anaerobic degradation of long-chain fatty acids via beta-oxidation cycle. Catalyzes the formation of 3-oxoacyl-CoA from enoyl-CoA via L-3-hydroxyacyl-CoA. It can also use D-3-hydroxyacyl-CoA and cis-3-enoyl-CoA as substrate. The sequence is that of Fatty acid oxidation complex subunit alpha from Salmonella choleraesuis (strain SC-B67).